Reading from the N-terminus, the 172-residue chain is MLAKVERIDPSELELNDKLIFINRVTKVVKGGKRMGFAALVVTGDGKNHVGIGVGKAKEVPSAISKASANAKRNLSRILLNGTTVPHEIVFKYGAAQVLLKPAAPGTGIIAGGSVRAVLESTGIKDILTKSMGCSNKANVAKATLGGLTAMRDPKTTVTKRRSSLKEEAAGG.

The S5 DRBM domain occupies 15–78; sequence LNDKLIFINR…ANAKRNLSRI (64 aa).

It belongs to the universal ribosomal protein uS5 family. In terms of assembly, part of the 30S ribosomal subunit. Contacts proteins S4 and S8.

In terms of biological role, with S4 and S12 plays an important role in translational accuracy. Located at the back of the 30S subunit body where it stabilizes the conformation of the head with respect to the body. In Dehalococcoides mccartyi (strain ATCC BAA-2266 / KCTC 15142 / 195) (Dehalococcoides ethenogenes (strain 195)), this protein is Small ribosomal subunit protein uS5.